The chain runs to 427 residues: Trigger factor (427 aa).

Positions 163–248 constitute a PPIase FKBP-type domain; it reads GDTVVIDFVG…VNEVKAKELP (86 aa).

The protein belongs to the FKBP-type PPIase family. Tig subfamily.

It is found in the cytoplasm. It carries out the reaction [protein]-peptidylproline (omega=180) = [protein]-peptidylproline (omega=0). Its function is as follows. Involved in protein export. Acts as a chaperone by maintaining the newly synthesized protein in an open conformation. Functions as a peptidyl-prolyl cis-trans isomerase. The protein is Trigger factor of Lactococcus lactis subsp. cremoris (strain SK11).